A 489-amino-acid polypeptide reads, in one-letter code: IPT/TIG domain-containing protein BACOVA_02650 (489 aa).

The first 27 residues, 1-27 (MKSIYKYLDTRLFLIGLLVLPFLAVVS), serve as a signal peptide directing secretion. The N-palmitoyl cysteine moiety is linked to residue cysteine 28. A lipid anchor (S-diacylglycerol cysteine) is attached at cysteine 28. 3 IPT/TIG domains span residues 57-103 (VNPG…PNEL), 136-204 (PYIT…TAPA), and 232-304 (PVVT…AIGG).

Its subcellular location is the cell outer membrane. Its pathway is glucan metabolism; xyloglucan degradation. In terms of biological role, polysaccharide-binding protein present at the surface of the cell. Probably mediates xyloglucan-binding before xyloglucan transport in the periplasm for degradation. The protein is IPT/TIG domain-containing protein BACOVA_02650 of Bacteroides ovatus (strain ATCC 8483 / DSM 1896 / JCM 5824 / BCRC 10623 / CCUG 4943 / NCTC 11153).